The primary structure comprises 334 residues: Beta-glucanase (334 aa).

Residues 1–27 (MKNRVISLLMASLLLVLSVIVAPFYKA) form the signal peptide. The region spanning 28–248 (EAATVVNTPF…YVKYYPNGVP (221 aa)) is the GH16 domain. Residue E136 is the Nucleophile of the active site. Catalysis depends on E140, which acts as the Proton donor. The segment at 246 to 265 (GVPQDNPTPTPTIAPSTPTN) is disordered. In terms of domain architecture, Dockerin spans 267 to 334 (NLPLKGDVNG…RYLIRAIPSL (68 aa)).

The protein belongs to the glycosyl hydrolase 16 family.

The enzyme catalyses Hydrolysis of (1-&gt;4)-beta-D-glucosidic linkages in beta-D-glucans containing (1-&gt;3)- and (1-&gt;4)-bonds.. This chain is Beta-glucanase (licB), found in Acetivibrio thermocellus (Hungateiclostridium thermocellum).